We begin with the raw amino-acid sequence, 188 residues long: 3-deoxy-D-manno-octulosonate 8-phosphate phosphatase KdsC (188 aa).

Mg(2+) is bound by residues aspartate 32 and aspartate 34. Substrate-binding positions include aspartate 34, 55–59, arginine 63, arginine 78, arginine 86, and lysine 102; that span reads NVRDG. Mg(2+) is bound at residue aspartate 125.

It belongs to the KdsC family. In terms of assembly, homotetramer. Mg(2+) is required as a cofactor.

It carries out the reaction 3-deoxy-alpha-D-manno-2-octulosonate-8-phosphate + H2O = 3-deoxy-alpha-D-manno-oct-2-ulosonate + phosphate. It participates in carbohydrate biosynthesis; 3-deoxy-D-manno-octulosonate biosynthesis; 3-deoxy-D-manno-octulosonate from D-ribulose 5-phosphate: step 3/3. It functions in the pathway bacterial outer membrane biogenesis; lipopolysaccharide biosynthesis. Its function is as follows. Catalyzes the hydrolysis of 3-deoxy-D-manno-octulosonate 8-phosphate (KDO 8-P) to 3-deoxy-D-manno-octulosonate (KDO) and inorganic phosphate. This Escherichia coli (strain K12) protein is 3-deoxy-D-manno-octulosonate 8-phosphate phosphatase KdsC.